The primary structure comprises 498 residues: ATP synthase subunit beta, chloroplastic (498 aa).

A Phosphothreonine modification is found at threonine 6. A Phosphoserine modification is found at serine 13. An ATP-binding site is contributed by glycine 172–threonine 179.

It belongs to the ATPase alpha/beta chains family. In terms of assembly, F-type ATPases have 2 components, CF(1) - the catalytic core - and CF(0) - the membrane proton channel. CF(1) has five subunits: alpha(3), beta(3), gamma(1), delta(1), epsilon(1). CF(0) has four main subunits: a(1), b(1), b'(1) and c(9-12).

It is found in the plastid. It localises to the chloroplast thylakoid membrane. It catalyses the reaction ATP + H2O + 4 H(+)(in) = ADP + phosphate + 5 H(+)(out). Functionally, produces ATP from ADP in the presence of a proton gradient across the membrane. The catalytic sites are hosted primarily by the beta subunits. This chain is ATP synthase subunit beta, chloroplastic, found in Raphanus sativus (Radish).